Here is a 657-residue protein sequence, read N- to C-terminus: Glycogen debranching enzyme (657 aa).

Residue D336 is the Nucleophile of the active site. E371 functions as the Proton donor in the catalytic mechanism. The disordered stretch occupies residues 460 to 479; sequence ANGEENRDGTNNNYSNNHGK.

It belongs to the glycosyl hydrolase 13 family.

It catalyses the reaction Hydrolysis of (1-&gt;6)-alpha-D-glucosidic linkages to branches with degrees of polymerization of three or four glucose residues in limit dextrin.. The protein operates within glycan degradation; glycogen degradation. Removes maltotriose and maltotetraose chains that are attached by 1,6-alpha-linkage to the limit dextrin main chain, generating a debranched limit dextrin. This chain is Glycogen debranching enzyme, found in Shigella flexneri serotype 5b (strain 8401).